The chain runs to 285 residues: Para-Rep C6 (285 aa).

The CRESS-DNA virus Rep endonuclease domain occupies 3–99 (TRQSTSWVFT…VAGPWEYGLF (97 aa)). The RCR-1 signature appears at 10 to 13 (VFTL). A divalent metal cation contacts are provided by glutamate 36 and histidine 42. Positions 42-44 (HLQ) match the RCR-2 motif. A Nuclear localization signal motif is present at residues 52-74 (RNTTLRQAKYIFNGLNPHLEIAR). Tyrosine 82 (for DNA cleavage activity) is an active-site residue. The short motif at 82–85 (YAMK) is the RCR-3 element. Residue aspartate 87 coordinates a divalent metal cation. Residues 99-105 (FIKRGSH) carry the Nuclear localization signal motif. ATP is bound at residue 175–183 (GPAGNEGKS).

Belongs to the nanoviridea/circoviridae replication-associated protein family. As to quaternary structure, homooligomer (Potential). Rep binds to repeated DNA motifs (iterons). Mg(2+) is required as a cofactor. Requires Mn(2+) as cofactor.

The protein localises to the host nucleus. It carries out the reaction ATP + H2O = ADP + phosphate + H(+). Initiates and terminates the replication only of its own subviral DNA molecule. The closed circular ssDNA genome is first converted to a superhelical dsDNA. Rep binds a specific hairpin at the genome origin of replication. Introduces an endonucleolytic nick within the intergenic region of the genome, thereby initiating the rolling circle replication (RCR). Following cleavage, binds covalently to the 5'-phosphate of DNA as a tyrosyl ester. The cleavage gives rise to a free 3'-OH that serves as a primer for the cellular DNA polymerase. The polymerase synthesizes the (+) strand DNA by rolling circle mechanism. After one round of replication, a Rep-catalyzed nucleotidyl transfer reaction releases a circular single-stranded virus genome, thereby terminating the replication. Displays origin-specific DNA cleavage, nucleotidyl transferase, ATPase and helicase activities. This is Para-Rep C6 (C6) from Subterranean clover stunt C6 alphasatellite (SCSC6A).